The sequence spans 383 residues: tRNA-specific 2-thiouridylase MnmA (383 aa).

ATP-binding positions include 9–16 (GMSGGVDS) and M35. Residues 95–97 (NPD) are interaction with target base in tRNA. Residue C100 is the Nucleophile of the active site. C100 and C196 form a disulfide bridge. G124 is a binding site for ATP. The interval 146–148 (KDQ) is interaction with tRNA. The active-site Cysteine persulfide intermediate is the C196. The interval 308–309 (RY) is interaction with tRNA.

Belongs to the MnmA/TRMU family.

The protein localises to the cytoplasm. It carries out the reaction S-sulfanyl-L-cysteinyl-[protein] + uridine(34) in tRNA + AH2 + ATP = 2-thiouridine(34) in tRNA + L-cysteinyl-[protein] + A + AMP + diphosphate + H(+). In terms of biological role, catalyzes the 2-thiolation of uridine at the wobble position (U34) of tRNA, leading to the formation of s(2)U34. The protein is tRNA-specific 2-thiouridylase MnmA of Burkholderia lata (strain ATCC 17760 / DSM 23089 / LMG 22485 / NCIMB 9086 / R18194 / 383).